Here is a 313-residue protein sequence, read N- to C-terminus: Expansin-like A4 (313 aa).

The first 30 residues, 1 to 30 (MDDNGDVHFCHRATAVVALLLLHLVVVANA), serve as a signal peptide directing secretion. Residues 59–173 (GGACGFGAAP…RRIPCEYRES (115 aa)) enclose the Expansin-like EG45 domain. N-linked (GlcNAc...) asparagine glycosylation occurs at Asn-124. The 94-residue stretch at 188–281 (THLAIRFLYQ…DWRPGEVYDT (94 aa)) folds into the Expansin-like CBD domain.

It belongs to the expansin family. Expansin-like A subfamily.

The protein resides in the secreted. The chain is Expansin-like A4 (EXLA4) from Oryza sativa subsp. japonica (Rice).